The chain runs to 142 residues: Small ribosomal subunit protein uS12 (142 aa).

This sequence belongs to the universal ribosomal protein uS12 family. As to quaternary structure, part of the 30S ribosomal subunit.

With S4 and S5 plays an important role in translational accuracy. Located at the interface of the 30S and 50S subunits. In Archaeoglobus fulgidus (strain ATCC 49558 / DSM 4304 / JCM 9628 / NBRC 100126 / VC-16), this protein is Small ribosomal subunit protein uS12.